A 602-amino-acid chain; its full sequence is Aspartate--tRNA(Asp/Asn) ligase (602 aa).

An L-aspartate-binding site is contributed by Glu-170. Residues 194 to 197 (QLFK) are aspartate. Arg-216 contributes to the L-aspartate binding site. Residues 216-218 (RDE) and Gln-225 contribute to the ATP site. His-448 lines the L-aspartate pocket. Residue Glu-482 participates in ATP binding. Arg-489 is an L-aspartate binding site. 534–537 (GWDR) contacts ATP. The segment at 559 to 602 (GGVDPLTSAPAPITAQQRKESGVDAKPEPKGDAAAAKPQVSAEK) is disordered. The span at 575-589 (QRKESGVDAKPEPKG) shows a compositional bias: basic and acidic residues.

The protein belongs to the class-II aminoacyl-tRNA synthetase family. Type 1 subfamily. As to quaternary structure, homodimer.

Its subcellular location is the cytoplasm. It catalyses the reaction tRNA(Asx) + L-aspartate + ATP = L-aspartyl-tRNA(Asx) + AMP + diphosphate. Its function is as follows. Aspartyl-tRNA synthetase with relaxed tRNA specificity since it is able to aspartylate not only its cognate tRNA(Asp) but also tRNA(Asn). Reaction proceeds in two steps: L-aspartate is first activated by ATP to form Asp-AMP and then transferred to the acceptor end of tRNA(Asp/Asn). The polypeptide is Aspartate--tRNA(Asp/Asn) ligase (Rhodococcus opacus (strain B4)).